The sequence spans 112 residues: Protein lin-52 homolog (112 aa).

This sequence belongs to the lin-52 family. In terms of assembly, component of the DREAM complex.

The polypeptide is Protein lin-52 homolog (lin52) (Tetraodon nigroviridis (Spotted green pufferfish)).